The sequence spans 313 residues: Jacalin-related lectin 8 (313 aa).

An N-terminal signal peptide occupies residues 1 to 23 (MFIIYLFIFLSSAIIDSNGVAMA). Jacalin-type lectin domains are found at residues 24-163 (QKIE…YVKT) and 165-309 (PTKS…YFSP).

The protein belongs to the jacalin lectin family.

The sequence is that of Jacalin-related lectin 8 (JAL8) from Arabidopsis thaliana (Mouse-ear cress).